Here is a 417-residue protein sequence, read N- to C-terminus: NADH-dependent phenylglyoxylate dehydrogenase subunit alpha (417 aa).

Dimer of heteropentamers composed of an alpha (PadG), a beta (PadI), a gamma (PadE), a delta (PadF) and an epsilon (PadH) subunit.

The catalysed reaction is phenylglyoxylate + NAD(+) + CoA = benzoyl-CoA + CO2 + NADH. With respect to regulation, activated by magnesium ions and thiamine diphosphate. Its function is as follows. Involved in the anaerobic metabolism of phenylalanine and phenylacetate. Catalyzes the oxidative decarboxylation of phenylglyoxylate to benzoyl-CoA and CO(2). It can also react slowly with 2-oxo-3-methylbutanoate and use different electron acceptors such as benzyl viologen, methyl viologen, FAD or FMN, but NAD seems to be the physiological electron acceptor. Also catalyzes an isotope exchange between CO(2) and the carboxyl group which proves partial or complete reversibility of the oxidative decarboxylation reaction. This chain is NADH-dependent phenylglyoxylate dehydrogenase subunit alpha (padG), found in Aromatoleum evansii (Azoarcus evansii).